Here is a 61-residue protein sequence, read N- to C-terminus: Small ribosomal subunit protein bS21 (61 aa).

It belongs to the bacterial ribosomal protein bS21 family.

The polypeptide is Small ribosomal subunit protein bS21 (Methylacidiphilum infernorum (isolate V4) (Methylokorus infernorum (strain V4))).